We begin with the raw amino-acid sequence, 1320 residues long: Clustered mitochondria protein homolog (1320 aa).

Disordered stretches follow at residues 166–241 (QQLE…KQKM), 552–582 (YGSMDTPTNEEEEQQQKEENEENKNNNTKSI), and 683–708 (LKEKEERQKKEGIDPPTATARDEDVQ). The span at 185 to 194 (TEDKEEKETI) shows a compositional bias: basic and acidic residues. Basic residues predominate over residues 202–213 (KKNKHHNKKGNK). Basic and acidic residues-rich tracts occupy residues 226–241 (NEEKLTPQQKERKQKM), 565–575 (QQQKEENEENK), and 683–695 (LKEKEERQKKEGI). In terms of domain architecture, Clu spans 379–649 (KTNRYDINKG…KATPRDPNYT (271 aa)). TPR repeat units lie at residues 955-988 (GLDLLEAGKTFFNQRKYELATELLGEALAIYHQV), 997-1030 (GACFTHLAMLAYQNEQYDLAIEYQKNALVITEKT), 1039-1072 (VQAYTTLAVFCQRSGRYNESIGYMKHVLYLTDLL), 1081-1114 (ASIYTAIAAILEDTERFDLALEFLKQTLKHQEFL), and 1123-1156 (STTYHKMAIVCARATNFDDSIIHQKKSTDILEKE). The segment at 1204–1320 (KADQFKKSQP…SKPNKKSSKN (117 aa)) is disordered. Over residues 1237–1247 (KPKKSQSKKSK) the composition is skewed to basic residues. Positions 1248–1311 (STNTTTTTNT…PTSSSAADSS (64 aa)) are enriched in low complexity.

Belongs to the CLU family.

The protein localises to the cytoplasm. MRNA-binding protein involved in proper cytoplasmic distribution of mitochondria. This Dictyostelium discoideum (Social amoeba) protein is Clustered mitochondria protein homolog.